The following is a 139-amino-acid chain: MKKNALINAELSYVVATLGHTDEITICDAGLPIPDETQRIDLALIPGVPTFIDTVKAVLGEMQIEGVVMAEEFAQVSPDLHQALIALIRNEELLCGKKITLSYVSHEAFKVHTQDSKAVIRTGECTPYANVIFQSGVVF.

H20 acts as the Proton donor in catalysis. Substrate is bound by residues D28, H106, and 128–130; that span reads YAN.

Belongs to the RbsD / FucU family. RbsD subfamily. In terms of assembly, homodecamer.

The protein resides in the cytoplasm. It carries out the reaction beta-D-ribopyranose = beta-D-ribofuranose. It participates in carbohydrate metabolism; D-ribose degradation; D-ribose 5-phosphate from beta-D-ribopyranose: step 1/2. Functionally, catalyzes the interconversion of beta-pyran and beta-furan forms of D-ribose. The polypeptide is D-ribose pyranase (Photobacterium profundum (strain SS9)).